Consider the following 500-residue polypeptide: Probable cytosol aminopeptidase 1 (500 aa).

Positions 263 and 268 each coordinate Mn(2+). Lys275 is a catalytic residue. The Mn(2+) site is built by Asp287, Asp346, and Glu348. The active site involves Arg350.

The protein belongs to the peptidase M17 family. The cofactor is Mn(2+).

It is found in the cytoplasm. It catalyses the reaction Release of an N-terminal amino acid, Xaa-|-Yaa-, in which Xaa is preferably Leu, but may be other amino acids including Pro although not Arg or Lys, and Yaa may be Pro. Amino acid amides and methyl esters are also readily hydrolyzed, but rates on arylamides are exceedingly low.. The catalysed reaction is Release of an N-terminal amino acid, preferentially leucine, but not glutamic or aspartic acids.. In terms of biological role, presumably involved in the processing and regular turnover of intracellular proteins. Catalyzes the removal of unsubstituted N-terminal amino acids from various peptides. In Shewanella oneidensis (strain ATCC 700550 / JCM 31522 / CIP 106686 / LMG 19005 / NCIMB 14063 / MR-1), this protein is Probable cytosol aminopeptidase 1 (pepA1).